The following is a 98-amino-acid chain: PsbF-like protein (98 aa).

The next 2 membrane-spanning stretches (helical) occupy residues Val5 to Lys25 and Thr73 to Met93.

This sequence belongs to the PsbE/PsbF family.

The protein resides in the membrane. Functionally, unknown. Resembles PsbF, one of the subunits of the photosystem II reaction center. However, it encodes asparagine rather than histidine at the site PsbF uses to bind heme. This Prochlorococcus marinus (strain MIT 9312) protein is PsbF-like protein.